A 221-amino-acid polypeptide reads, in one-letter code: Zingipain-1 (221 aa).

3 cysteine pairs are disulfide-bonded: Cys24-Cys65, Cys58-Cys98, and Cys155-Cys206. Cys27 is an active-site residue. 2 N-linked (GlcNAc...) asparagine glycosylation sites follow: Asn95 and Asn156. Catalysis depends on residues His161 and Asn181.

The protein belongs to the peptidase C1 family.

The enzyme catalyses Preferential cleavage of peptides with a proline residue at the P2 position.. Functionally, cysteine proteinase with a high level of diversity in substrate specificity, an amino acid bearing a proline residue at the P2 position is preferred. In Zingiber officinale (Ginger), this protein is Zingipain-1.